The chain runs to 288 residues: 4-diphosphocytidyl-2-C-methyl-D-erythritol kinase (288 aa).

Lysine 8 is an active-site residue. 92 to 102 (PVAAGMAGGST) is an ATP binding site. The active site involves aspartate 134.

It belongs to the GHMP kinase family. IspE subfamily.

It catalyses the reaction 4-CDP-2-C-methyl-D-erythritol + ATP = 4-CDP-2-C-methyl-D-erythritol 2-phosphate + ADP + H(+). Its pathway is isoprenoid biosynthesis; isopentenyl diphosphate biosynthesis via DXP pathway; isopentenyl diphosphate from 1-deoxy-D-xylulose 5-phosphate: step 3/6. Functionally, catalyzes the phosphorylation of the position 2 hydroxy group of 4-diphosphocytidyl-2C-methyl-D-erythritol. The sequence is that of 4-diphosphocytidyl-2-C-methyl-D-erythritol kinase from Clostridium perfringens (strain SM101 / Type A).